A 93-amino-acid polypeptide reads, in one-letter code: PqqA binding protein (93 aa).

This sequence belongs to the PqqD family. In terms of assembly, monomer. Interacts with PqqE.

The protein operates within cofactor biosynthesis; pyrroloquinoline quinone biosynthesis. Functionally, functions as a PqqA binding protein and presents PqqA to PqqE, in the pyrroloquinoline quinone (PQQ) biosynthetic pathway. The polypeptide is PqqA binding protein (Methylococcus capsulatus (strain ATCC 33009 / NCIMB 11132 / Bath)).